A 163-amino-acid chain; its full sequence is Probable ribosome biogenesis protein RLP24 (163 aa).

The protein belongs to the eukaryotic ribosomal protein eL24 family. As to quaternary structure, associated with nucleolar and cytoplasmic pre-60S particles. At the end of biogenesis it dissociates from cytoplasmic pre-60S particles and is likely to be exchanged for its ribosomal homolog, RPL24.

It is found in the nucleus. Its subcellular location is the nucleolus. Its function is as follows. Involved in the biogenesis of the 60S ribosomal subunit. Ensures the docking of GTPBP4/NOG1 to pre-60S particles. The protein is Probable ribosome biogenesis protein RLP24 (RSL24D1) of Homo sapiens (Human).